The following is a 237-amino-acid chain: Coat protein (237 aa).

The tract at residues 1–24 is disordered; it reads MSAPASTTQPIGSTTSTTTKTAGA.

This sequence belongs to the potexvirus capsid protein family.

It is found in the virion. Its function is as follows. Required for genome encapsidation. Forms ribonucleoprotein complexes along with TGB1 helicase and viral RNA. The chain is Coat protein from Potato virus X (strain UK3) (PVX).